Here is a 342-residue protein sequence, read N- to C-terminus: Protein-glutamate methylesterase/protein-glutamine glutaminase 2 (342 aa).

The region spanning 2 to 119 (NIGIVNDLPL…GGSADPSQPL (118 aa)) is the Response regulatory domain. Asp-53 carries the post-translational modification 4-aspartylphosphate. The 194-residue stretch at 144–337 (PAPQGALPPL…DQLISLVQRN (194 aa)) folds into the CheB-type methylesterase domain. Active-site residues include Ser-159, His-186, and Asp-279.

It belongs to the CheB family. In terms of processing, phosphorylated by CheA. Phosphorylation of the N-terminal regulatory domain activates the methylesterase activity.

It is found in the cytoplasm. The catalysed reaction is [protein]-L-glutamate 5-O-methyl ester + H2O = L-glutamyl-[protein] + methanol + H(+). It catalyses the reaction L-glutaminyl-[protein] + H2O = L-glutamyl-[protein] + NH4(+). Functionally, involved in chemotaxis. Part of a chemotaxis signal transduction system that modulates chemotaxis in response to various stimuli. Catalyzes the demethylation of specific methylglutamate residues introduced into the chemoreceptors (methyl-accepting chemotaxis proteins or MCP) by CheR. Also mediates the irreversible deamidation of specific glutamine residues to glutamic acid. In Burkholderia mallei (strain ATCC 23344), this protein is Protein-glutamate methylesterase/protein-glutamine glutaminase 2.